An 87-amino-acid chain; its full sequence is Omega-theraphotoxin-Gr1a (87 aa).

Positions 1-24 (MKAQIFVVVLGLAALSVLCYGSEA) are cleaved as a signal peptide. A propeptide spanning residues 25-49 (DESALHEEIFQLLAASDEVPKPQER) is cleaved from the precursor. Disulfide bonds link C51–C65, C58–C70, and C64–C79. The residue at position 85 (V85) is a Valine amide.

As to expression, expressed by the venom gland.

The protein resides in the secreted. Inhibits P/Q- (Cav2.1/CACNA1A) and N-type (Cav2.2/CACNA1B) voltage-gated calcium channel by modifying voltage-dependent gating. It selectively and reversibly blocks the calcium channels coupled to glutamate release. Also inhibits potassium channels (Kv2.1/KCNB1) with lower affinity. Has also been shown to weakly inhibit Kv11.1/KCNH2/ERG1, Kv1.2/KCNA2, Kv1.3/KCNA3, Nav1.5/SCN5A, Nav1.7/SCN9A and TRPV1. This chain is Omega-theraphotoxin-Gr1a, found in Grammostola rosea (Chilean rose tarantula).